We begin with the raw amino-acid sequence, 257 residues long: 1-(5-phosphoribosyl)-5-[(5-phosphoribosylamino)methylideneamino] imidazole-4-carboxamide isomerase (257 aa).

Asp8 acts as the Proton acceptor in catalysis. Catalysis depends on Asp129, which acts as the Proton donor.

Belongs to the HisA/HisF family.

The protein resides in the cytoplasm. It carries out the reaction 1-(5-phospho-beta-D-ribosyl)-5-[(5-phospho-beta-D-ribosylamino)methylideneamino]imidazole-4-carboxamide = 5-[(5-phospho-1-deoxy-D-ribulos-1-ylimino)methylamino]-1-(5-phospho-beta-D-ribosyl)imidazole-4-carboxamide. Its pathway is amino-acid biosynthesis; L-histidine biosynthesis; L-histidine from 5-phospho-alpha-D-ribose 1-diphosphate: step 4/9. The chain is 1-(5-phosphoribosyl)-5-[(5-phosphoribosylamino)methylideneamino] imidazole-4-carboxamide isomerase from Cyanothece sp. (strain PCC 7425 / ATCC 29141).